We begin with the raw amino-acid sequence, 2167 residues long: Papilin (2167 aa).

A signal peptide spans 1 to 19 (MRLLLFSAALLLCSVPTWA). Residues 76–123 (TGNWGPWVPENECSRSCGGGVQLEKRQCSGDCTGASVRYISCNLNACE) form the TSP type-1 1 domain. Cystine bridges form between cysteine 88–cysteine 117, cysteine 92–cysteine 122, and cysteine 103–cysteine 107. Residue asparagine 268 is glycosylated (N-linked (GlcNAc...) asparagine). 3 consecutive TSP type-1 domains span residues 341–402 (VDYM…VDCE), 404–459 (EWFT…TCNR), and 461–525 (ACPE…GPCE). Disulfide bonds link cysteine 353/cysteine 396, cysteine 357/cysteine 401, and cysteine 368/cysteine 382. Residues asparagine 386 and asparagine 445 are each glycosylated (N-linked (GlcNAc...) asparagine). Asparagine 541, asparagine 568, and asparagine 638 each carry an N-linked (GlcNAc...) asparagine glycan. TSP type-1 domains are found at residues 585-643 (CEYE…TNEE) and 645-702 (CTGT…DDCP). Residues asparagine 715, asparagine 729, asparagine 741, asparagine 814, asparagine 820, asparagine 857, asparagine 933, and asparagine 1090 are each glycosylated (N-linked (GlcNAc...) asparagine). Cystine bridges form between cysteine 1089–cysteine 1141, cysteine 1099–cysteine 1124, cysteine 1116–cysteine 1137, cysteine 1150–cysteine 1202, cysteine 1161–cysteine 1185, and cysteine 1177–cysteine 1198. BPTI/Kunitz inhibitor domains are found at residues 1089–1141 (CNQT…ETIC) and 1150–1202 (CYLP…SMFC). The interval 1239-1273 (QSAEQPQPQQPQQQQQQQQQQPQQPRQSMEDICRS) is disordered. Low complexity predominate over residues 1243 to 1263 (QPQPQQPQQQQQQQQQQPQQP). 3 cysteine pairs are disulfide-bonded: cysteine 1271–cysteine 1321, cysteine 1280–cysteine 1304, and cysteine 1296–cysteine 1317. One can recognise a BPTI/Kunitz inhibitor 3 domain in the interval 1271-1321 (CRSRQDAGPCETYSDQWFYNAFSQECETFTYGGCGGNLNRFRSKDECEQRC). The disordered stretch occupies residues 1332 to 1365 (ARQEQAQPAAQPAQPAQPSNIVSPPQQSASPVVV). 9 disulfide bridges follow: cysteine 1375/cysteine 1425, cysteine 1384/cysteine 1408, cysteine 1400/cysteine 1421, cysteine 1447/cysteine 1497, cysteine 1456/cysteine 1480, cysteine 1472/cysteine 1493, cysteine 1504/cysteine 1554, cysteine 1513/cysteine 1537, and cysteine 1529/cysteine 1550. BPTI/Kunitz inhibitor domains follow at residues 1375 to 1425 (CHLN…ESLC), 1447 to 1497 (CDEA…KAAC), and 1504 to 1554 (CQLP…QARC). Residues 1556-1615 (KDDQTTTTSQPEELPSLPLVQEDPQPRPAFSLKQSFAHSRRRDAPFARSVSARHHTPDSE) are disordered. 9 disulfides stabilise this stretch: cysteine 1621-cysteine 1671, cysteine 1630-cysteine 1654, cysteine 1646-cysteine 1667, cysteine 1731-cysteine 1781, cysteine 1740-cysteine 1764, cysteine 1756-cysteine 1777, cysteine 1790-cysteine 1840, cysteine 1799-cysteine 1823, and cysteine 1815-cysteine 1836. BPTI/Kunitz inhibitor domains are found at residues 1621–1671 (CYAV…ETSC), 1731–1781 (CMLP…ERAC), and 1790–1840 (CELP…ESLC). Asparagine 1848 carries N-linked (GlcNAc...) asparagine glycosylation. 6 cysteine pairs are disulfide-bonded: cysteine 1853–cysteine 1903, cysteine 1862–cysteine 1886, cysteine 1878–cysteine 1899, cysteine 1914–cysteine 1964, cysteine 1923–cysteine 1947, and cysteine 1939–cysteine 1960. BPTI/Kunitz inhibitor domains lie at 1853–1903 (CTLE…QQSC) and 1914–1964 (CTLR…FRRC). Asparagine 1992, asparagine 2087, and asparagine 2133 each carry an N-linked (GlcNAc...) asparagine glycan. A disordered region spans residues 2075–2106 (RTTSRPMLTPSKNFSLGTPPTPSPSTVSTTPF). Residues 2078–2090 (SRPMLTPSKNFSL) show a composition bias toward polar residues. Positions 2124–2163 (TSNSCMDVGNASTCDLIVKNGLCGKKRYGTFCCHTCTRVH) constitute a PLAC domain.

It belongs to the papilin family. In terms of tissue distribution, localizes to the basement membranes of the gonad primordium, pharynx and intestine (at protein level). Expressed in head and CAN neurons, coelomocytes, body-wall muscles and anal depressor and sphincter and stomatointestinal muscles. Expressed Isoform a: is expressed in body wall muscles and distal cell tips. Isoform b: expressed in embryonic muscles.

It is found in the secreted. It localises to the extracellular space. The protein localises to the extracellular matrix. The protein resides in the basement membrane. Its function is as follows. Involved in pharynx morphogenesis probably by remodeling the basement membrane. In terms of biological role, plays a role in embryogenesis, the second phase of distal cell tip migration and is required for distribution of the metalloproteinase, mig-17, during organogenesis. Plays a role in post embryonic distal cell tip migration. Essential extracellular matrix (ECM) protein required for hypodermal enclosure in the embryo. This Caenorhabditis elegans protein is Papilin (mig-6).